A 114-amino-acid chain; its full sequence is Flagellar hook-basal body complex protein FliE (114 aa).

This sequence belongs to the FliE family.

The protein localises to the bacterial flagellum basal body. The polypeptide is Flagellar hook-basal body complex protein FliE (Burkholderia lata (strain ATCC 17760 / DSM 23089 / LMG 22485 / NCIMB 9086 / R18194 / 383)).